Consider the following 640-residue polypeptide: Fructose-1,6-bisphosphatase class 3 (640 aa).

This sequence belongs to the FBPase class 3 family. Requires Mn(2+) as cofactor.

The catalysed reaction is beta-D-fructose 1,6-bisphosphate + H2O = beta-D-fructose 6-phosphate + phosphate. Its pathway is carbohydrate biosynthesis; gluconeogenesis. This chain is Fructose-1,6-bisphosphatase class 3, found in Lactococcus lactis subsp. cremoris (strain MG1363).